The chain runs to 100 residues: Large ribosomal subunit protein eL31 (100 aa).

This sequence belongs to the eukaryotic ribosomal protein eL31 family.

The polypeptide is Large ribosomal subunit protein eL31 (Hyperthermus butylicus (strain DSM 5456 / JCM 9403 / PLM1-5)).